The sequence spans 142 residues: Small ribosomal subunit protein uS12 (142 aa).

It belongs to the universal ribosomal protein uS12 family. As to quaternary structure, part of the 30S ribosomal subunit.

In terms of biological role, with S4 and S5 plays an important role in translational accuracy. Located at the interface of the 30S and 50S subunits. This is Small ribosomal subunit protein uS12 from Methanosarcina barkeri (strain Fusaro / DSM 804).